Consider the following 213-residue polypeptide: uncharacterized protein (213 aa).

The segment covering 1-14 has biased composition (polar residues); the sequence is MSSDVLVTTPAQRQ. Residues 1 to 26 are disordered; the sequence is MSSDVLVTTPAQRQTEPHAEAVSRNR. The HTH tetR-type domain occupies 29-89; it reads QATFRKVLAA…EVYLDLVRQV (61 aa).

This is an uncharacterized protein from Mycobacterium tuberculosis (strain CDC 1551 / Oshkosh).